A 479-amino-acid chain; its full sequence is Solute carrier family 46 member 2 (479 aa).

Over 1-23 (MGPGGTCPWSSRLSGFRVRTWIE) the chain is Cytoplasmic. Residues 24-44 (PVVASTQVAGSLYDAGLLLVV) form a helical membrane-spanning segment. Residues 45–80 (KESFKSEAGGSSNYSANQSLVEYQEDQQQKAISNFN) lie on the Extracellular side of the membrane. N-linked (GlcNAc...) asparagine glycans are attached at residues N57 and N61. A helical transmembrane segment spans residues 81-101 (IIYNLVLGLTPLLSAYGLGWL). Over 102-110 (SDRYHRKIS) the chain is Cytoplasmic. The helical transmembrane segment at 111 to 131 (ICTAMLGFLLSRIGLLLKVML) threads the bilayer. Topologically, residues 132-140 (DWPVEVMYG) are extracellular. The helical transmembrane segment at 141–161 (AAALNGLCGSFSAYWSGVMAL) threads the bilayer. Residues 162–174 (GSLGCSEGRRSVR) are Cytoplasmic-facing. The helical transmembrane segment at 175-195 (LILIDLVLGLAGFSGSMASGH) threads the bilayer. At 196 to 207 (LFKQIVGHSAQG) the chain is on the extracellular side. The helical transmembrane segment at 208-228 (LLLTACSVGCAAFALFYSLFV) threads the bilayer. The Cytoplasmic segment spans residues 229–281 (LKVPESKPNKVHPTVDTVSGMMGTYRTLDPDQQDKQNVPRNPRTPGKGKSSQR). Residues 255–277 (TLDPDQQDKQNVPRNPRTPGKGK) are disordered. A helical membrane pass occupies residues 282-302 (EVVALLFVGAIIYDLAAVGTV). The Extracellular segment spans residues 303 to 321 (DVMALFVLKEPLHWNQVQL). A helical transmembrane segment spans residues 322–342 (GYGMASGYIIFITSFLGVLVF). The Cytoplasmic segment spans residues 343–348 (SRCFRD). The helical transmembrane segment at 349 to 369 (TTMIIIGMLSFGSGALLLAFV) threads the bilayer. The Extracellular portion of the chain corresponds to 370-371 (KE). The helical transmembrane segment at 372–392 (TYMFYIARAIMLFALIPITTI) threads the bilayer. The Cytoplasmic portion of the chain corresponds to 393–407 (RSAMSKLIKDSSYGK). The chain crosses the membrane as a helical span at residues 408–428 (IFVILQLCLTLTGVVTSTIYN). Over 429–441 (KIYQLTLDKFIGT) the chain is Extracellular. A helical transmembrane segment spans residues 442-462 (CFVLSSFLSFLAIVPIGVVAY). Topologically, residues 463–479 (KQVPRSQQGECAEKQRS) are cytoplasmic.

It belongs to the major facilitator superfamily. SLC46A family. Glycosylated. As to expression, expressed on cortical epithelial cells in the thymus. Mainly expressed in the thymic cortex and is highly enriched in SCID thymus. Also expressed in lymph nodes, heart, fetal liver, brain, spleen, intestine and kidney, but not in adult liver, skin, skeletal muscle and lung. Expressed in skin epidermis.

Its subcellular location is the endosome membrane. It localises to the cell membrane. The enzyme catalyses N-acetyl-beta-D-glucosaminyl-(1-&gt;4)-1,6-anhydro-N-acetyl-beta-D-muramoyl-L-alanyl-gamma-D-glutamyl-meso-2,6-diaminopimeloyl-D-alanine(out) + n H(+)(out) = N-acetyl-beta-D-glucosaminyl-(1-&gt;4)-1,6-anhydro-N-acetyl-beta-D-muramoyl-L-alanyl-gamma-D-glutamyl-meso-2,6-diaminopimeloyl-D-alanine(in) + n H(+)(in). It catalyses the reaction L-alanyl-gamma-D-glutamyl-meso-2,6-diaminopimelate(out) + n H(+)(out) = L-alanyl-gamma-D-glutamyl-meso-2,6-diaminopimelate(in) + n H(+)(in). The catalysed reaction is N-acetyl-D-muramoyl-L-alanyl-D-isoglutamine(out) + n H(+)(out) = N-acetyl-D-muramoyl-L-alanyl-D-isoglutamine(in) + n H(+)(in). It carries out the reaction 2',3'-cGAMP(out) + n H(+)(out) = 2',3'-cGAMP(in) + n H(+)(in). The enzyme catalyses 3',3'-cGAMP(out) + n H(+)(out) = 3',3'-cGAMP(in) + n H(+)(in). Its activity is regulated as follows. Down-regulated by the anti-inflammatory drug methotrexate. In terms of biological role, proton-coupled transporter that delivers pathogen-associated or danger-associated molecular patterns to cytosolic pattern recognition receptors as part of the innate immune response to microbes or tissue injury. Has selectivity toward muropeptides that contain the amino acid diaminopimelic acid (DAP-type peptidoglycan muropeptides) including Tri-DAP and tracheal toxin (TCT), common in Gram-negative bacteria and Gram-positive bacilli. In the context of immune recognition of skin microbiota, shuttles bacterial muropeptides across the endolysosomal membranes into the cytosol for recognition by NOD1, triggering MYD88-dependent secretion of IL1A and neutrophil recruitment in a pyroptosis-type inflammatory process. To a lesser extent and redundantly, transports muramyl dipeptides derived from most bacterial proteoglycans, eliciting NOD2 receptor activation and downstream inflammatory responses. Postulated to function as an importer of cyclic GMP-AMP dinucleotides (cGAMPs) in monocyte and macrophage cell lineages. Selectively imports cGAMPs derived from pathogenic bacteria such as 3'3'-cGAMP thus providing for differential immune recognition of pathogenic versus commensal bacteria. During tumorigenesis may transport extracellular tumor-derived 2'3'-cGAMP across the plasma membrane of M1-polarized macrophages to activate the anti-tumoral stimulator of interferon genes (STING) pathway. The transport mechanism, its electrogenicity and stoichiometry remain to be elucidated. This Mus musculus (Mouse) protein is Solute carrier family 46 member 2.